The sequence spans 682 residues: tRNA(Met) cytidine acetyltransferase TmcA (682 aa).

ATP-binding positions include Q176, 198-207 (GRGKSTLAGM), and R320. Residues 357–534 (QQQWIQQPEL…SGCYTAMAIF (178 aa)) enclose the N-acetyltransferase domain. Acetyl-CoA is bound by residues 462–464 (VAV) and E502.

Belongs to the RNA cytidine acetyltransferase family. TmcA subfamily.

Its subcellular location is the cytoplasm. The catalysed reaction is cytidine(34) in elongator tRNA(Met) + acetyl-CoA + ATP + H2O = N(4)-acetylcytidine(34) in elongator tRNA(Met) + ADP + phosphate + CoA + H(+). In terms of biological role, catalyzes the formation of N(4)-acetylcytidine (ac(4)C) at the wobble position of tRNA(Met), by using acetyl-CoA as an acetyl donor and ATP (or GTP). This Photorhabdus asymbiotica subsp. asymbiotica (strain ATCC 43949 / 3105-77) (Xenorhabdus luminescens (strain 2)) protein is tRNA(Met) cytidine acetyltransferase TmcA.